The primary structure comprises 269 residues: Exodeoxyribonuclease WalJ (269 aa).

A divalent metal cation-binding residues include H61, H63, D65, H66, and D150.

The protein belongs to the metallo-beta-lactamase superfamily. Requires Fe(2+) as cofactor. The cofactor is Zn(2+). It depends on Mn(2+) as a cofactor.

Its subcellular location is the cell membrane. 5'-&gt;3' double-stranded DNA exonuclease. May be involved in the WalK/WalR signal transduction pathway. Required for accurate coordination of cell division with DNA replication. May play a role in cell wall metabolism. This is Exodeoxyribonuclease WalJ from Streptococcus pneumoniae serotype 2 (strain D39 / NCTC 7466).